The chain runs to 155 residues: Cytochrome P450 (155 aa).

A heme-binding site is contributed by Cys99.

Belongs to the cytochrome P450 family. The cofactor is heme.

The protein is Cytochrome P450 of Helianthus annuus (Common sunflower).